Consider the following 274-residue polypeptide: Non-heme haloperoxidase (274 aa).

One can recognise an AB hydrolase-1 domain in the interval 22–254 (PIMFHHGWPL…RLKVYPGLSH (233 aa)). Active-site residues include Ser95, Asp225, and His254.

Belongs to the AB hydrolase superfamily. Bacterial non-heme haloperoxidase / perhydrolase family.

The protein is Non-heme haloperoxidase (thcF) of Rhodococcus erythropolis (Arthrobacter picolinophilus).